The primary structure comprises 394 residues: Elongation factor Tu (394 aa).

Residues 10–204 (KPHVNVGTIG…ALDSYIPEPE (195 aa)) form the tr-type G domain. Residues 19–26 (GHVDHGKT) are G1. GTP is bound at residue 19 to 26 (GHVDHGKT). Position 26 (T26) interacts with Mg(2+). Residues 60–64 (GITIS) form a G2 region. The tract at residues 81–84 (DCPG) is G3. GTP contacts are provided by residues 81–85 (DCPGH) and 136–139 (NKCD). Positions 136 to 139 (NKCD) are G4. A G5 region spans residues 174–176 (SAL).

It belongs to the TRAFAC class translation factor GTPase superfamily. Classic translation factor GTPase family. EF-Tu/EF-1A subfamily. Monomer.

It is found in the cytoplasm. It carries out the reaction GTP + H2O = GDP + phosphate + H(+). In terms of biological role, GTP hydrolase that promotes the GTP-dependent binding of aminoacyl-tRNA to the A-site of ribosomes during protein biosynthesis. The chain is Elongation factor Tu from Pseudoalteromonas atlantica (strain T6c / ATCC BAA-1087).